The chain runs to 62 residues: Frontoxin III (62 aa).

Cystine bridges form between C3-C24, C17-C41, C43-C54, and C55-C60.

As to expression, expressed by the venom gland.

It localises to the secreted. Binds to muscle nicotinic acetylcholine receptor (nAChR) and inhibit acetylcholine from binding to the receptor, thereby impairing neuromuscular transmission. This chain is Frontoxin III, found in Micrurus frontalis (Coral snake).